The primary structure comprises 242 residues: B-box zinc finger protein 20 (242 aa).

Positions 5, 8, 28, 33, 58, 61, 81, and 91 each coordinate Zn(2+). The B box-type 1; atypical zinc finger occupies 5–47; it reads CAVCDKEEASVFCCADEAALCNGCDRHVHFANKLAGKHLRFSL. The B box-type 2; atypical zinc-finger motif lies at 58–100; the sequence is CDICGERRALLFCQEDRAILCRECDIPIHQANEHTKKHNRFLL. The interval 112-153 is disordered; it reads YPRASNSNSAAAFGRAKTRPKSVSSEVPSSASNEVFTSSSST. Over residues 133–153 the composition is skewed to low complexity; that stretch reads SVSSEVPSSASNEVFTSSSST.

As to quaternary structure, interacts with MED25 and COP1. In terms of processing, COP1-mediated ubiquitination and subsequent proteasomal degradation of BBX20 occurs in the dark.

It localises to the nucleus. Acts as a positive regulator of seedling photomorphogenesis. Plays a negative role in brassinosteroid responses. The protein is B-box zinc finger protein 20 of Arabidopsis thaliana (Mouse-ear cress).